The chain runs to 203 residues: MGSRDHLFKVLVVGDAAVGKTSLVQRYSQDSFSKHYKSTVGVDFALKVLQWSDYEIVRLQLWDIAGQERFTSMTRLYYRDASACVIMFDVTNATTFSNSQRWKQDLDSKLTLPNGEPVPCLLLANKCDLSPWAVSRDQIDRFSKENGFTGWTETSVKENKNINEAMRVLIEKMMRNSTEDIMSLSTQGDYINLQTKSSSWSCC.

GTP contacts are provided by Ser33, Lys34, His35, Tyr36, Lys37, and Thr39. Residues Tyr36–Phe44 carry the Effector region motif. The residue at position 71 (Thr71) is a Phosphothreonine; by LRRK2. Ser72 carries the phosphoserine; by LRRK2 modification. Lys126, Val156, and Lys157 together coordinate GTP. S-geranylgeranyl cysteine attachment occurs at residues Cys202 and Cys203.

The protein belongs to the small GTPase superfamily. Rab family. As to quaternary structure, interacts with LRRK2 (via the N-terminus); this interaction is direct and stimulates kinase activity. Post-translationally, in case of Salmonella enterica serovar Typhimurium (S.typhimurium) infection, is proteolytically cleaved between Gly-41 and Val-42 by the GtgE viral protease encoded on the Gifsy-2 lysogen bacteriophage, which therefore prevents the recruitment of RAB29 to S.typhimurium-containing vacuoles. In contrast, no proteolytically cleavage is detected in S.typhi-infected cells. In terms of tissue distribution, ubiquitous.

Its subcellular location is the cell membrane. The protein localises to the cytoplasm. The protein resides in the perinuclear region. It localises to the golgi apparatus. It is found in the golgi apparatus membrane. Its subcellular location is the trans-Golgi network. The protein localises to the vacuole. The protein resides in the cytoskeleton. Its function is as follows. The small GTPases Rab are key regulators in vesicle trafficking. Essential for maintaining the integrity of the endosome-trans-Golgi network structure. Together with LRRK2, plays a role in the retrograde trafficking pathway for recycling proteins, such as mannose 6 phosphate receptor (M6PR), between lysosomes and the Golgi apparatus in a retromer-dependent manner. Recruits LRRK2 to the Golgi complex and stimulates LRRK2 kinase activity. Stimulates phosphorylation of RAB10 'Thr-73' by LRRK2. Regulates neuronal process morphology in the intact central nervous system (CNS). May play a role in the formation of typhoid toxin transport intermediates during Salmonella enterica serovar Typhi (S.typhi) epithelial cell infection. The chain is Ras-related protein Rab-7L1 (RAB29) from Homo sapiens (Human).